The following is a 360-amino-acid chain: Aminomethyltransferase (360 aa).

Belongs to the GcvT family. In terms of assembly, the glycine cleavage system is composed of four proteins: P, T, L and H.

The catalysed reaction is N(6)-[(R)-S(8)-aminomethyldihydrolipoyl]-L-lysyl-[protein] + (6S)-5,6,7,8-tetrahydrofolate = N(6)-[(R)-dihydrolipoyl]-L-lysyl-[protein] + (6R)-5,10-methylene-5,6,7,8-tetrahydrofolate + NH4(+). The glycine cleavage system catalyzes the degradation of glycine. This is Aminomethyltransferase from Pseudomonas aeruginosa (strain ATCC 15692 / DSM 22644 / CIP 104116 / JCM 14847 / LMG 12228 / 1C / PRS 101 / PAO1).